Here is an 829-residue protein sequence, read N- to C-terminus: FAST kinase domain-containing protein 1, mitochondrial (829 aa).

The residue at position 346 (lysine 346) is an N6-acetyllysine. Residues 761–821 enclose the RAP domain; that stretch reads IAIELLDVRA…KDARMDYLRE (61 aa).

This sequence belongs to the FAST kinase family. Expression detected in spleen, testis, colon, heart, smooth muscle, kidney, brain, lung, liver, brown and white adipose tissue with highest expression in heart and brown adipose tissue.

Its subcellular location is the mitochondrion. Involved in the down-regulation of mitochondrial MT-ND3 mRNA levels which leads to decreased respiratory complex I abundance and activity. The polypeptide is FAST kinase domain-containing protein 1, mitochondrial (Fastkd1) (Mus musculus (Mouse)).